Consider the following 395-residue polypeptide: Elongation factor Tu (395 aa).

Residues 10–205 form the tr-type G domain; it reads KVHMNVGTIG…AMDSYFEDPV (196 aa). Residues 19-26 are G1; it reads GHVDHGKT. 19–26 lines the GTP pocket; the sequence is GHVDHGKT. Thr26 lines the Mg(2+) pocket. Positions 60–64 are G2; sequence GITIN. The G3 stretch occupies residues 81-84; sequence DCPG. GTP is bound by residues 81–85 and 136–139; these read DCPGH and NKVD. A G4 region spans residues 136–139; it reads NKVD. Residues 173 to 175 form a G5 region; the sequence is SAF.

Belongs to the TRAFAC class translation factor GTPase superfamily. Classic translation factor GTPase family. EF-Tu/EF-1A subfamily. As to quaternary structure, monomer.

Its subcellular location is the cytoplasm. It catalyses the reaction GTP + H2O = GDP + phosphate + H(+). In terms of biological role, GTP hydrolase that promotes the GTP-dependent binding of aminoacyl-tRNA to the A-site of ribosomes during protein biosynthesis. The protein is Elongation factor Tu of Treponema pallidum (strain Nichols).